Reading from the N-terminus, the 259-residue chain is Insulin-like growth factor-binding protein 1 (259 aa).

The N-terminal stretch at 1-25 (MSEVPVARVWLVLLLLTVQVGVTAG) is a signal peptide. The region spanning 26-107 (APWQCAPCSA…TRGQGACVQE (82 aa)) is the IGFBP N-terminal domain. Intrachain disulfides connect cysteine 30–cysteine 57, cysteine 33–cysteine 59, cysteine 41–cysteine 60, cysteine 48–cysteine 63, cysteine 71–cysteine 84, and cysteine 78–cysteine 104. Position 45 is a phosphoserine; by FAM20C (serine 45). Phosphoserine is present on residues serine 120, serine 123, serine 126, and serine 144. Serine 156 carries the post-translational modification Phosphoserine; by FAM20C. Threonine 157 carries the phosphothreonine; by FAM20C modification. Residue tyrosine 158 is modified to Phosphotyrosine. The Thyroglobulin type-1 domain maps to 173–251 (KEPCRIELYR…SPEIRGDPNC (79 aa)). 3 disulfide bridges follow: cysteine 176-cysteine 206, cysteine 217-cysteine 228, and cysteine 230-cysteine 251. Threonine 193 bears the Phosphothreonine; by FAM20C mark. Phosphoserine; by FAM20C occurs at positions 194 and 199. Serine 242 bears the Phosphoserine; by FAM20C mark. The Cell attachment site motif lies at 246-248 (RGD).

Binds equally well IGF1 and IGF2. Interacts with integrin ITGA5:ITGB1. Interacts with VHL; this interaction inhibits HIF1A degradation. Phosphorylated; probably by casein kinase II. Phosphorylation alters the affinity of the protein for IGFs. In amniotic fluid, the unmodified protein is the most abundant form, while mono-, bi-, tri- and tetraphosphorylated forms are present in decreasing amounts. The phosphorylation state may influence the propensity to proteolysis.

Its subcellular location is the secreted. Its function is as follows. Multifunctional protein that plays a critical role in regulating the availability of IGFs such as IGF1 and IGF2 to their receptors and thereby regulates IGF-mediated cellular processes including cell migration, proliferation, differentiation or apoptosis in a cell-type specific manner. Also plays a positive role in cell migration by interacting with integrin ITGA5:ITGB1 through its RGD motif. Mechanistically, binding to integrins leads to activation of focal adhesion kinase/PTK2 and stimulation of the mitogen-activated protein kinase (MAPK) pathway. Regulates cardiomyocyte apoptosis by suppressing HIF-1alpha/HIF1A ubiquitination and subsequent degradation. The polypeptide is Insulin-like growth factor-binding protein 1 (IGFBP1) (Homo sapiens (Human)).